A 694-amino-acid polypeptide reads, in one-letter code: Elongation factor G (694 aa).

A tr-type G domain is found at 6 to 288 (KLYRNIGIAA…GVIEYLPSPT (283 aa)). GTP contacts are provided by residues 15 to 22 (AHVDAGKT), 86 to 90 (DTPGH), and 140 to 143 (NKMD).

This sequence belongs to the TRAFAC class translation factor GTPase superfamily. Classic translation factor GTPase family. EF-G/EF-2 subfamily.

It localises to the cytoplasm. Its function is as follows. Catalyzes the GTP-dependent ribosomal translocation step during translation elongation. During this step, the ribosome changes from the pre-translocational (PRE) to the post-translocational (POST) state as the newly formed A-site-bound peptidyl-tRNA and P-site-bound deacylated tRNA move to the P and E sites, respectively. Catalyzes the coordinated movement of the two tRNA molecules, the mRNA and conformational changes in the ribosome. The protein is Elongation factor G of Legionella pneumophila subsp. pneumophila (strain Philadelphia 1 / ATCC 33152 / DSM 7513).